We begin with the raw amino-acid sequence, 254 residues long: uncharacterized protein (254 aa).

This is an uncharacterized protein from Caenorhabditis elegans.